The sequence spans 325 residues: Putative carboxypeptidase YocD (325 aa).

The Nucleophile role is filled by serine 111. Residues glutamate 228 and histidine 296 each act as charge relay system in the active site.

The protein belongs to the peptidase S66 family.

In Bacillus subtilis (strain 168), this protein is Putative carboxypeptidase YocD (yocD).